The primary structure comprises 351 residues: Photosystem II D2 protein (351 aa).

The chain crosses the membrane as a helical span at residues 39–59; the sequence is CAYLALGAWFTGTTFVSSWYT. His116 provides a ligand contact to chlorophyll a. A helical membrane pass occupies residues 123-139; sequence GFCLRQFEIARLVGLRP. Pheophytin a contacts are provided by Gln128 and Asn141. Residues 151-164 form a helical membrane-spanning segment; it reads VFVSVFLLYPLGQA. His196 lines the chlorophyll a pocket. Residues 206–226 traverse the membrane as a helical segment; that stretch reads GALLCAIHGATVENTLFEDGE. A plastoquinone-binding residues include His213 and Phe260. Position 213 (His213) interacts with Fe cation. Residue His267 participates in Fe cation binding. Residues 277-293 traverse the membrane as a helical segment; that stretch reads GLWVSSIGIVGLALNLR.

Belongs to the reaction center PufL/M/PsbA/D family. PSII is composed of 1 copy each of membrane proteins PsbA, PsbB, PsbC, PsbD, PsbE, PsbF, PsbH, PsbI, PsbJ, PsbK, PsbL, PsbM, PsbT, PsbY, PsbZ, Psb30/Ycf12, at least 3 peripheral proteins of the oxygen-evolving complex and a large number of cofactors. It forms dimeric complexes. Requires The D1/D2 heterodimer binds P680, chlorophylls that are the primary electron donor of PSII, and subsequent electron acceptors. It shares a non-heme iron and each subunit binds pheophytin, quinone, additional chlorophylls, carotenoids and lipids. There is also a Cl(-1) ion associated with D1 and D2, which is required for oxygen evolution. The PSII complex binds additional chlorophylls, carotenoids and specific lipids. as cofactor.

It is found in the plastid. The protein localises to the chloroplast thylakoid membrane. The enzyme catalyses 2 a plastoquinone + 4 hnu + 2 H2O = 2 a plastoquinol + O2. Photosystem II (PSII) is a light-driven water:plastoquinone oxidoreductase that uses light energy to abstract electrons from H(2)O, generating O(2) and a proton gradient subsequently used for ATP formation. It consists of a core antenna complex that captures photons, and an electron transfer chain that converts photonic excitation into a charge separation. The D1/D2 (PsbA/PsbD) reaction center heterodimer binds P680, the primary electron donor of PSII as well as several subsequent electron acceptors. D2 is needed for assembly of a stable PSII complex. The chain is Photosystem II D2 protein from Cyanidium caldarium (Red alga).